The primary structure comprises 119 residues: Protein TusC (119 aa).

Belongs to the DsrF/TusC family. As to quaternary structure, heterohexamer, formed by a dimer of trimers. The hexameric TusBCD complex contains 2 copies each of TusB, TusC and TusD. The TusBCD complex interacts with TusE.

Its subcellular location is the cytoplasm. In terms of biological role, part of a sulfur-relay system required for 2-thiolation of 5-methylaminomethyl-2-thiouridine (mnm(5)s(2)U) at tRNA wobble positions. The sequence is that of Protein TusC from Sodalis glossinidius (strain morsitans).